The primary structure comprises 210 residues: MRPRLWLLLAAQLTVLHGNSVLQQTPAYIKVQTNKMVMLSCEAKISLSNMCIYWLRQRQAPSSDSHHEFLTLWDSAKGTIHGEEVEQEKIAVFRDASRFILNLTSVKPEDSGIYFCMIVGSPELTFGKGTQLSVVDFLPTTAQPTKKSTLKKRVCRLPRPETQKGPLCSPVTLGLLVAGVLVLLVSLGVAMHLCCRRRRARLRFMKQFYK.

The signal sequence occupies residues 1 to 18 (MRPRLWLLLAAQLTVLHG). The region spanning 19–132 (NSVLQQTPAY…ELTFGKGTQL (114 aa)) is the Ig-like V-type domain. The Extracellular portion of the chain corresponds to 19-170 (NSVLQQTPAY…ETQKGPLCSP (152 aa)). A disulfide bridge links Cys-41 with Cys-116. The N-linked (GlcNAc...) asparagine glycan is linked to Asn-102. The helical transmembrane segment at 171–191 (VTLGLLVAGVLVLLVSLGVAM) threads the bilayer. The Cytoplasmic segment spans residues 192–210 (HLCCRRRRARLRFMKQFYK).

In general heterodimer of an alpha and a beta chain linked by two disulfide bonds.

Its subcellular location is the cell membrane. Functionally, identifies cytotoxic/suppressor T-cells that interact with MHC class I bearing targets. CD8 is thought to play a role in the process of T-cell mediated killing. The chain is T-cell surface glycoprotein CD8 beta-2 chain from Homo sapiens (Human).